A 121-amino-acid chain; its full sequence is Neuropeptide-like protein 7 (121 aa).

The N-terminal stretch at 1-22 (MYIKAALLIVVLFGVASQITSA) is a signal peptide.

Functionally, may regulate lifespan in response to food availability and oxidative stress. This is Neuropeptide-like protein 7 from Caenorhabditis elegans.